The primary structure comprises 292 residues: Bifunctional protein FolD (292 aa).

Residues 166-168 (GRS), serine 191, and isoleucine 232 each bind NADP(+).

The protein belongs to the tetrahydrofolate dehydrogenase/cyclohydrolase family. In terms of assembly, homodimer.

It catalyses the reaction (6R)-5,10-methylene-5,6,7,8-tetrahydrofolate + NADP(+) = (6R)-5,10-methenyltetrahydrofolate + NADPH. It carries out the reaction (6R)-5,10-methenyltetrahydrofolate + H2O = (6R)-10-formyltetrahydrofolate + H(+). Its pathway is one-carbon metabolism; tetrahydrofolate interconversion. Catalyzes the oxidation of 5,10-methylenetetrahydrofolate to 5,10-methenyltetrahydrofolate and then the hydrolysis of 5,10-methenyltetrahydrofolate to 10-formyltetrahydrofolate. The sequence is that of Bifunctional protein FolD from Wolbachia sp. subsp. Drosophila simulans (strain wRi).